A 502-amino-acid polypeptide reads, in one-letter code: ATP synthase subunit alpha (502 aa).

Residues 115–139 form a disordered region; it reads VDGLGPVETTETRPIESPAPGVMDR. Residue 169-176 coordinates ATP; the sequence is GDRQTGKT.

It belongs to the ATPase alpha/beta chains family. F-type ATPases have 2 components, CF(1) - the catalytic core - and CF(0) - the membrane proton channel. CF(1) has five subunits: alpha(3), beta(3), gamma(1), delta(1), epsilon(1). CF(0) has three main subunits: a(1), b(2) and c(9-12). The alpha and beta chains form an alternating ring which encloses part of the gamma chain. CF(1) is attached to CF(0) by a central stalk formed by the gamma and epsilon chains, while a peripheral stalk is formed by the delta and b chains.

It is found in the cell membrane. The enzyme catalyses ATP + H2O + 4 H(+)(in) = ADP + phosphate + 5 H(+)(out). In terms of biological role, produces ATP from ADP in the presence of a proton gradient across the membrane. The alpha chain is a regulatory subunit. This Geobacillus thermodenitrificans (strain NG80-2) protein is ATP synthase subunit alpha.